The chain runs to 64 residues: Alpha-toxin Amm5 (64 aa).

The LCN-type CS-alpha/beta domain occupies 2 to 64 (KDGYIIDDLN…VSIKEKGRCN (63 aa)). 4 disulfides stabilise this stretch: Cys12–Cys63, Cys16–Cys36, Cys22–Cys46, and Cys26–Cys48. Asparagine amide is present on Asn64.

Expressed by the venom gland.

The protein resides in the secreted. Alpha toxins bind voltage-independently at site-3 of sodium channels (Nav) and inhibit the inactivation of the activated channels, thereby blocking neuronal transmission. This is Alpha-toxin Amm5 from Androctonus mauritanicus mauritanicus (Scorpion).